The sequence spans 79 residues: Defensin-like protein 117 (79 aa).

The signal sequence occupies residues 1–24 (MTTTKTMLVAFVLTLFFVISSVHC). Intrachain disulfides connect Cys-40-Cys-75, Cys-46-Cys-68, Cys-53-Cys-73, and Cys-57-Cys-74.

This sequence belongs to the DEFL family.

The protein resides in the secreted. This chain is Defensin-like protein 117, found in Arabidopsis thaliana (Mouse-ear cress).